The following is a 229-amino-acid chain: Large ribosomal subunit protein uL1 (229 aa).

Belongs to the universal ribosomal protein uL1 family. As to quaternary structure, part of the 50S ribosomal subunit.

In terms of biological role, binds directly to 23S rRNA. The L1 stalk is quite mobile in the ribosome, and is involved in E site tRNA release. Protein L1 is also a translational repressor protein, it controls the translation of the L11 operon by binding to its mRNA. The protein is Large ribosomal subunit protein uL1 of Clostridium beijerinckii (strain ATCC 51743 / NCIMB 8052) (Clostridium acetobutylicum).